The sequence spans 461 residues: Divalent metal cation transporter MntH (461 aa).

Helical transmembrane passes span 56–76 (AMAFFGPGYLVAVGYMDPGNW), 89–109 (TLLAVALVSNIMAIVLQSLCA), 132–152 (AMVLWLLAEIAIIATDIAEVI), 160–180 (LIFGIPLELGVLITALDVFLI), 193–213 (ALVITLLGVIAVCFAIQLALA), 230–250 (IVTNPDMLYLALGILGATVMP), 285–305 (IALMFALLINASILILAAATF), 322–342 (LLAPLLGLAIAPTLFGVALLC), 378–398 (AIAIVPAAGVTIFYGDSGTGQ), 399–419 (LLILTQVVLSLQLSFAVFPLV), and 433–453 (SPLWLSAIAWLIAVVIAALNV).

Belongs to the NRAMP family.

The protein localises to the cell inner membrane. Functionally, h(+)-stimulated, divalent metal cation uptake system. This Agrobacterium fabrum (strain C58 / ATCC 33970) (Agrobacterium tumefaciens (strain C58)) protein is Divalent metal cation transporter MntH.